We begin with the raw amino-acid sequence, 638 residues long: Poly(A)-specific ribonuclease PARN (638 aa).

A divalent metal cation-binding residues include Asp28 and Glu30. A disordered region spans residues Arg143 to Asn165. Over residues Gln152–Asn165 the composition is skewed to polar residues. A phosphoserine mark is found at Ser163 and Ser167. The R3H domain maps to Lys178–Asp245. Position 220 is an N6-acetyllysine (Lys220). 2 residues coordinate a divalent metal cation: Asp292 and Asp382. Residue Lys499 is modified to N6-acetyllysine. A Phosphoserine modification is found at Ser530. Ser557 is modified (phosphoserine; by MAPKAPK2). The tract at residues Arg573–Trp638 is disordered. 2 positions are modified to phosphoserine: Ser583 and Ser587. A compositionally biased stretch (basic residues) spans Lys606–Lys615. Residues Ser619, Ser623, and Ser627 each carry the phosphoserine modification.

It belongs to the CAF1 family. Homodimer. Found in a mRNA decay complex with RENT1, RENT2 and RENT3B. Interacts with KHSRP. Interacts with CELF1/CUGBP1. Interacts with ZC3HAV1 in an RNA-independent manner. Interacts with DHX36. Mg(2+) is required as a cofactor. In terms of processing, phosphorylation by MAPKAPK2, preventing GADD45A mRNA degradation after genotoxic stress.

The protein resides in the nucleus. The protein localises to the cytoplasm. It localises to the nucleolus. The enzyme catalyses Exonucleolytic cleavage of poly(A) to 5'-AMP.. Functionally, 3'-exoribonuclease that has a preference for poly(A) tails of mRNAs, thereby efficiently degrading poly(A) tails. Exonucleolytic degradation of the poly(A) tail is often the first step in the decay of eukaryotic mRNAs and is also used to silence certain maternal mRNAs translationally during oocyte maturation and early embryonic development. Involved in nonsense-mediated mRNA decay, a critical process of selective degradation of mRNAs that contain premature stop codons. Also involved in degradation of inherently unstable mRNAs that contain AU-rich elements (AREs) in their 3'-UTR, possibly via its interaction with KHSRP. Probably mediates the removal of poly(A) tails of AREs mRNAs, which constitutes the first step of destabilization. Interacts with both the 3'-end poly(A) tail and the 5'-end cap structure during degradation, the interaction with the cap structure being required for an efficient degradation of poly(A) tails. Also able to recognize poly(A) tails of microRNAs such as MIR21 and H/ACA box snoRNAs (small nucleolar RNAs) leading to microRNAs degradation or snoRNA increased stability. The protein is Poly(A)-specific ribonuclease PARN (PARN) of Bos taurus (Bovine).